A 230-amino-acid chain; its full sequence is Sugar fermentation stimulation protein homolog (230 aa).

The protein belongs to the SfsA family.

This chain is Sugar fermentation stimulation protein homolog, found in Clostridium tetani (strain Massachusetts / E88).